The chain runs to 351 residues: Phosphoribosylformylglycinamidine cyclo-ligase (351 aa).

This sequence belongs to the AIR synthase family.

The protein resides in the cytoplasm. The enzyme catalyses 2-formamido-N(1)-(5-O-phospho-beta-D-ribosyl)acetamidine + ATP = 5-amino-1-(5-phospho-beta-D-ribosyl)imidazole + ADP + phosphate + H(+). Its pathway is purine metabolism; IMP biosynthesis via de novo pathway; 5-amino-1-(5-phospho-D-ribosyl)imidazole from N(2)-formyl-N(1)-(5-phospho-D-ribosyl)glycinamide: step 2/2. The polypeptide is Phosphoribosylformylglycinamidine cyclo-ligase (Burkholderia mallei (strain NCTC 10247)).